The sequence spans 270 residues: MAEAVGAVTLIAAPARRRWLWSALAAMLGLLTARISALEVHTPKEIFVVNGTQGKLTCTFDSPNTTGWLTTVSWSFQPEGTDSAVSFFHYSQGQVYIGDYPPFKDRVTWAGDLDKKDASINIENIQAVHNGTYICDVKNPPDIVVRPGQIRLHVVEIDNLLVFLVWVVVGTVTAVVLGLTLLISLVLVVLYRRKHSKRDYTGCSTSERLSPVKQAPRKCPSDTEGLVKSPPSAGSHQGPVIYAQLDHSGGHHSGKINKSESVVYADIRKD.

An N-terminal signal peptide occupies residues 1–35 (MAEAVGAVTLIAAPARRRWLWSALAAMLGLLTARI). In terms of domain architecture, Ig-like V-type spans 36-151 (SALEVHTPKE…DIVVRPGQIR (116 aa)). The Extracellular segment spans residues 36 to 162 (SALEVHTPKE…HVVEIDNLLV (127 aa)). Asparagine 50 and asparagine 130 each carry an N-linked (GlcNAc...) asparagine glycan. Cysteine 58 and cysteine 135 form a disulfide bridge. The helical transmembrane segment at 163-183 (FLVWVVVGTVTAVVLGLTLLI) threads the bilayer. At 184 to 270 (SLVLVVLYRR…SVVYADIRKD (87 aa)) the chain is on the cytoplasmic side. The tract at residues 201–257 (TGCSTSERLSPVKQAPRKCPSDTEGLVKSPPSAGSHQGPVIYAQLDHSGGHHSGKIN) is disordered. Phosphoserine occurs at positions 204, 206, 210, and 221. An ITIM motif 1 motif is present at residues 240–245 (VIYAQL). Tyrosine 242 carries the phosphotyrosine modification. Phosphoserine is present on serine 261. Residues 262-267 (VVYADI) carry the ITIM motif 2 motif. The residue at position 264 (tyrosine 264) is a Phosphotyrosine.

Belongs to the myelin P0 protein family. Interacts with phosphorylated PTPN11/SHP-2. Phosphorylated on tyrosine residues upon stimulation with pervanadate and concanavalin-A (ConA). Phosphorylation at Tyr-242 and Tyr-264 is required for interaction with PTPN11/SHP-2. Dephosphorylated by PTPN11/SHP-2 (in vitro). In terms of processing, N-glycosylated.

The protein localises to the membrane. In terms of biological role, cell surface receptor, which is involved in signal transduction processes. Recruits PTPN11/SHP-2 to the cell membrane and is a putative substrate of PTPN11/SHP-2. Is a major receptor for concanavalin-A (ConA) and is involved in cellular signaling induced by ConA, which probably includes Src family tyrosine-protein kinases. May be involved in regulation of integrin-mediated cell motility. This Rattus norvegicus (Rat) protein is Myelin protein zero-like protein 1 (Mpzl1).